Reading from the N-terminus, the 286-residue chain is Pyridoxal kinase PdxY (286 aa).

Residues S9 and 44–45 (TQ) contribute to the substrate site. ATP contacts are provided by residues D111, A143, E148, K181, and 208-211 (RPLV). D223 is a substrate binding site.

It belongs to the pyridoxine kinase family. PdxY subfamily. As to quaternary structure, homodimer. Mg(2+) serves as cofactor.

The enzyme catalyses pyridoxal + ATP = pyridoxal 5'-phosphate + ADP + H(+). Its pathway is cofactor metabolism; pyridoxal 5'-phosphate salvage; pyridoxal 5'-phosphate from pyridoxal: step 1/1. Pyridoxal kinase involved in the salvage pathway of pyridoxal 5'-phosphate (PLP). Catalyzes the phosphorylation of pyridoxal to PLP. The sequence is that of Pyridoxal kinase PdxY from Salmonella choleraesuis (strain SC-B67).